The sequence spans 602 residues: Elongation factor 4 (602 aa).

A tr-type G domain is found at 7–188; the sequence is ENIRNFSIIA…AIVELIPPPK (182 aa). Residues 19–24 and 135–138 contribute to the GTP site; these read DHGKST and NKID.

This sequence belongs to the TRAFAC class translation factor GTPase superfamily. Classic translation factor GTPase family. LepA subfamily.

It localises to the cell inner membrane. The enzyme catalyses GTP + H2O = GDP + phosphate + H(+). Required for accurate and efficient protein synthesis under certain stress conditions. May act as a fidelity factor of the translation reaction, by catalyzing a one-codon backward translocation of tRNAs on improperly translocated ribosomes. Back-translocation proceeds from a post-translocation (POST) complex to a pre-translocation (PRE) complex, thus giving elongation factor G a second chance to translocate the tRNAs correctly. Binds to ribosomes in a GTP-dependent manner. This is Elongation factor 4 from Chlamydia abortus (strain DSM 27085 / S26/3) (Chlamydophila abortus).